The sequence spans 247 residues: Isoprenyl transferase (247 aa).

Residue Asp18 is part of the active site. Position 18 (Asp18) interacts with Mg(2+). Substrate-binding positions include 19-22 (GNGR), Trp23, Arg31, His35, and 63-65 (SSE). Residue Asn66 is the Proton acceptor of the active site. Residues Trp67, Arg69, Arg186, and 192 to 194 (RLS) contribute to the substrate site. Glu205 contacts Mg(2+).

The protein belongs to the UPP synthase family. Homodimer. The cofactor is Mg(2+).

Its function is as follows. Catalyzes the condensation of isopentenyl diphosphate (IPP) with allylic pyrophosphates generating different type of terpenoids. This is Isoprenyl transferase from Agrobacterium fabrum (strain C58 / ATCC 33970) (Agrobacterium tumefaciens (strain C58)).